The primary structure comprises 267 residues: tRNA pseudouridine synthase A (267 aa).

Asp-54 functions as the Nucleophile in the catalytic mechanism. Tyr-114 is a binding site for substrate.

This sequence belongs to the tRNA pseudouridine synthase TruA family. As to quaternary structure, homodimer.

The catalysed reaction is uridine(38/39/40) in tRNA = pseudouridine(38/39/40) in tRNA. Functionally, formation of pseudouridine at positions 38, 39 and 40 in the anticodon stem and loop of transfer RNAs. The polypeptide is tRNA pseudouridine synthase A (Tropheryma whipplei (strain Twist) (Whipple's bacillus)).